A 387-amino-acid polypeptide reads, in one-letter code: Cytochrome b (387 aa).

The next 4 membrane-spanning stretches (helical) occupy residues 32 to 52 (FGSL…TLAM), 76 to 98 (WLVR…LHIG), 113 to 133 (VWAI…LGYV), and 179 to 199 (FFAL…MHLI). 2 residues coordinate heme b: H82 and H96. Heme b contacts are provided by H183 and H197. Residue H202 coordinates a ubiquinone. Helical transmembrane passes span 226 to 246 (YLFK…SFVF), 290 to 310 (LLGV…PITD), 322 to 342 (LSKF…KLGA), and 349 to 369 (FIEL…IIVP).

Belongs to the cytochrome b family. In terms of assembly, fungal cytochrome b-c1 complex contains 10 subunits; 3 respiratory subunits, 2 core proteins and 5 low-molecular weight proteins. Cytochrome b-c1 complex is a homodimer. It depends on heme b as a cofactor.

Its subcellular location is the mitochondrion inner membrane. Its function is as follows. Component of the ubiquinol-cytochrome c reductase complex (complex III or cytochrome b-c1 complex) that is part of the mitochondrial respiratory chain. The b-c1 complex mediates electron transfer from ubiquinol to cytochrome c. Contributes to the generation of a proton gradient across the mitochondrial membrane that is then used for ATP synthesis. The polypeptide is Cytochrome b (COB) (Podospora anserina (strain S / ATCC MYA-4624 / DSM 980 / FGSC 10383) (Pleurage anserina)).